A 333-amino-acid polypeptide reads, in one-letter code: MFRAAAPGQLRRAASLLRFQSTLVIAEHANDSLAPITLNTITAAGRLGGEVSCLVAGTKCDKVVQDLCKVAGVAKVLVAQHDAYKGLLPEELTPLILETQKQFSYTHICAGASAFGKNLLPRVAAKLNVAPVSDIIEIKSPDTFVRTIYAGNALCTVKCDEKVKVFSVRGTSFEAAAASGGSASSEKAPSSSSAGISEWLDQKLTKSDRPELTGAKVVVSGGRGLKSGENFKLLYDLADQLHAAVGASRAAVDAGFVPNDMQVGQTGKIVAPELYIAVGISGAIQHLAGMKDSKTIVAINKDPEAPIFQVADYGIVADLFKVVPEMTEILKKK.

Residues 1 to 19 constitute a mitochondrion transit peptide; it reads MFRAAAPGQLRRAASLLRF. Residues 20–204 form a domain I region; sequence QSTLVIAEHA…GISEWLDQKL (185 aa). Position 59 is an N6-acetyllysine; alternate (lysine 59). Lysine 59 bears the N6-succinyllysine; alternate mark. An N6-acetyllysine modification is found at lysine 62. Lysine 69 is subject to N6-acetyllysine; alternate. At lysine 69 the chain carries N6-succinyllysine; alternate. An N6-acetyllysine modification is found at lysine 75. Lysine 85 is modified (N6-acetyllysine; alternate). The residue at position 85 (lysine 85) is an N6-succinyllysine; alternate. Position 93 is a phosphothreonine (threonine 93). N6-acetyllysine is present on residues lysine 101 and lysine 139. Phosphoserine is present on serine 140. The residue at position 158 (lysine 158) is an N6-acetyllysine; alternate. Lysine 158 bears the N6-succinyllysine; alternate mark. Lysine 164 carries the N6-acetyllysine modification. Lysine 187 is subject to N6-succinyllysine. Lysine 203 is modified (N6-acetyllysine; alternate). At lysine 203 the chain carries N6-succinyllysine; alternate. Residues 205-333 form a domain II region; the sequence is TKSDRPELTG…PEMTEILKKK (129 aa). N6-succinyllysine is present on lysine 216. Arginine 223 provides a ligand contact to FAD. 2 positions are modified to N6-acetyllysine; alternate: lysine 226 and lysine 232. N6-succinyllysine; alternate occurs at positions 226 and 232. FAD-binding positions include serine 248, 263-266, 281-286, and asparagine 300; these read VGQT and SGAIQH. Position 301 is an N6-succinyllysine (lysine 301). 318–319 serves as a coordination point for FAD; it reads DL.

Belongs to the ETF alpha-subunit/FixB family. In terms of assembly, heterodimer composed of ETFA and ETFB. Identified in a complex that contains ETFA, ETFB and ETFRF1. Interaction with ETFRF1 promotes dissociation of the bound FAD and loss of electron transfer activity. Interacts with TASOR. It depends on FAD as a cofactor.

The protein resides in the mitochondrion matrix. Its function is as follows. Heterodimeric electron transfer flavoprotein that accepts electrons from several mitochondrial dehydrogenases, including acyl-CoA dehydrogenases, glutaryl-CoA and sarcosine dehydrogenase. It transfers the electrons to the main mitochondrial respiratory chain via ETF-ubiquinone oxidoreductase (ETF dehydrogenase). Required for normal mitochondrial fatty acid oxidation and normal amino acid metabolism. This Rattus norvegicus (Rat) protein is Electron transfer flavoprotein subunit alpha, mitochondrial (Etfa).